Here is a 361-residue protein sequence, read N- to C-terminus: Aminomethyltransferase (361 aa).

The protein belongs to the GcvT family. As to quaternary structure, the glycine cleavage system is composed of four proteins: P, T, L and H.

The catalysed reaction is N(6)-[(R)-S(8)-aminomethyldihydrolipoyl]-L-lysyl-[protein] + (6S)-5,6,7,8-tetrahydrofolate = N(6)-[(R)-dihydrolipoyl]-L-lysyl-[protein] + (6R)-5,10-methylene-5,6,7,8-tetrahydrofolate + NH4(+). In terms of biological role, the glycine cleavage system catalyzes the degradation of glycine. This is Aminomethyltransferase from Bacteroides thetaiotaomicron (strain ATCC 29148 / DSM 2079 / JCM 5827 / CCUG 10774 / NCTC 10582 / VPI-5482 / E50).